The chain runs to 314 residues: tRNA selenocysteine 1-associated protein 1 (314 aa).

RRM domains lie at 2–85 (NSLW…RSNY) and 94–173 (FSLF…LASS).

It belongs to the RRM TRSPAP family.

The protein resides in the nucleus. It localises to the cytoplasm. Its function is as follows. Involved in the early steps of selenocysteine biosynthesis and tRNA(Sec) charging to the later steps resulting in the cotranslational incorporation of selenocysteine into selenoproteins. The chain is tRNA selenocysteine 1-associated protein 1 from Danio rerio (Zebrafish).